The chain runs to 67 residues: Conotoxin AbVIO (67 aa).

An N-terminal signal peptide occupies residues 1–17 (VIIIAVLFLTACQLIAT). A propeptide spanning residues 18-40 (ASYARSERKHPDLRLSSRNSKLS) is cleaved from the precursor. 3 cysteine pairs are disulfide-bonded: C43–C57, C50–C61, and C56–C66.

Belongs to the conotoxin O1 superfamily. As to expression, expressed by the venom duct.

It localises to the secreted. The protein is Conotoxin AbVIO of Conus abbreviatus (Abbreviated cone).